A 312-amino-acid chain; its full sequence is tRNA dimethylallyltransferase (312 aa).

Residue 15–22 (GPTAAGKS) participates in ATP binding. Residue 17–22 (TAAGKS) participates in substrate binding. An interaction with substrate tRNA region spans residues 40–43 (DSMQ).

The protein belongs to the IPP transferase family. Monomer. Mg(2+) serves as cofactor.

The enzyme catalyses adenosine(37) in tRNA + dimethylallyl diphosphate = N(6)-dimethylallyladenosine(37) in tRNA + diphosphate. Catalyzes the transfer of a dimethylallyl group onto the adenine at position 37 in tRNAs that read codons beginning with uridine, leading to the formation of N6-(dimethylallyl)adenosine (i(6)A). The polypeptide is tRNA dimethylallyltransferase (Streptomyces avermitilis (strain ATCC 31267 / DSM 46492 / JCM 5070 / NBRC 14893 / NCIMB 12804 / NRRL 8165 / MA-4680)).